The sequence spans 329 residues: GTP 3',8-cyclase (329 aa).

The Radical SAM core domain maps to 8 to 234 (AFARKFYYLR…QLRQRSDGPA (227 aa)). GTP is bound at residue Arg17. [4Fe-4S] cluster is bound by residues Cys24 and Cys28. Residue Tyr30 participates in S-adenosyl-L-methionine binding. A [4Fe-4S] cluster-binding site is contributed by Cys31. Arg68 is a GTP binding site. Gly72 lines the S-adenosyl-L-methionine pocket. Residue Thr99 participates in GTP binding. Ser123 provides a ligand contact to S-adenosyl-L-methionine. Lys160 provides a ligand contact to GTP. S-adenosyl-L-methionine is bound at residue Met194. Cys257 and Cys260 together coordinate [4Fe-4S] cluster. GTP is bound at residue 262-264 (RLR). Cys274 contributes to the [4Fe-4S] cluster binding site.

It belongs to the radical SAM superfamily. MoaA family. In terms of assembly, monomer and homodimer. Requires [4Fe-4S] cluster as cofactor.

The catalysed reaction is GTP + AH2 + S-adenosyl-L-methionine = (8S)-3',8-cyclo-7,8-dihydroguanosine 5'-triphosphate + 5'-deoxyadenosine + L-methionine + A + H(+). Its pathway is cofactor biosynthesis; molybdopterin biosynthesis. Catalyzes the cyclization of GTP to (8S)-3',8-cyclo-7,8-dihydroguanosine 5'-triphosphate. In Escherichia coli O7:K1 (strain IAI39 / ExPEC), this protein is GTP 3',8-cyclase.